The following is a 174-amino-acid chain: Large ribosomal subunit protein uL15 (174 aa).

2 disordered regions span residues 1-57 (MKLH…QMRI) and 147-174 (PWVVERRSRSRGPNPPRHSRKAETPQKA). Positions 21–35 (RGIGSGKGKTGGKGM) are enriched in gly residues.

Belongs to the universal ribosomal protein uL15 family. In terms of assembly, part of the 50S ribosomal subunit.

Functionally, binds to the 23S rRNA. The sequence is that of Large ribosomal subunit protein uL15 from Roseiflexus sp. (strain RS-1).